A 238-amino-acid chain; its full sequence is Large ribosomal subunit protein uL3 (238 aa).

The protein belongs to the universal ribosomal protein uL3 family. As to quaternary structure, part of the 50S ribosomal subunit. Forms a cluster with proteins L14 and L19.

One of the primary rRNA binding proteins, it binds directly near the 3'-end of the 23S rRNA, where it nucleates assembly of the 50S subunit. This is Large ribosomal subunit protein uL3 from Mesoplasma florum (strain ATCC 33453 / NBRC 100688 / NCTC 11704 / L1) (Acholeplasma florum).